The following is a 67-amino-acid chain: Arasin 2 (67 aa).

The signal sequence occupies residues 1–25; it reads MERRTLLVVLLVCSCVVAAAAEASP. A disordered region spans residues 22–44; that stretch reads EASPSRWPSPGRPRPFPGRPNPI. Residues 31-44 show a composition bias toward pro residues; the sequence is PGRPRPFPGRPNPI. 2 disulfides stabilise this stretch: cysteine 50-cysteine 59 and cysteine 52-cysteine 57.

As to quaternary structure, interacts with chitin through the N-terminal region (26-48). This interaction may be important, since chitin is a component of the fungal cell wall, as well as of the crab exoskeleton (permitting a possible action of arasin in wound healing in case of lesions). Disulfide bonds are important for activity especially against Gram-negative bacteria, since the linearization of the peptide causes a strong decrease of activity on these bacteria. In terms of tissue distribution, mainly expressed in hemocytes. No or very low expression in heart, gills, inestines, and epidermis.

In terms of biological role, antimicrobial peptide that has a large activity spectrum with activity against Gram-positive, Gram-negative bacteria, as well as against fungi. Shows activity at micromolar concentrations. Displays minimal inhibitory concentration (MIC) values lower than minimal bactericidal concentrations (MBC). May have a dual mode of action depending on the peptide concentrations. At MIC concentrations, the peptide penetrates into the cytoplasm of target cells (tested on the Gram-negative E.coli). The two inner membrane proteins YgdD and SbmA may be required for this uptake. At concentrations higher than MIC, arasin may act by disrupting membranes. Does not show hemolytic activity. The protein is Arasin 2 of Hyas araneus (Atlantic lyre crab).